The sequence spans 101 residues: Hg-scorpine-like-2 (101 aa).

The signal sequence occupies residues 1–17; that stretch reads MKLTILILLVITSFCSC. The BetaSPN-type CS-alpha/beta domain occupies 60-100; it reads QQLCMFNKDVAGWCEKSCQQSAHQKGYCHGTKCKCGIPLNY. Disulfide bonds link Cys-63-Cys-87, Cys-73-Cys-92, and Cys-77-Cys-94.

The protein belongs to the long chain scorpion toxin family. Class 3 subfamily. In terms of tissue distribution, expressed by the venom gland.

The protein localises to the secreted. In terms of biological role, inhibits voltage-gated potassium channels. This is Hg-scorpine-like-2 from Hoffmannihadrurus gertschi (Scorpion).